The primary structure comprises 202 residues: MSTETRVNERIRVPEVRLIGPGGEQVGIVRIEDALRVAADADLDLVEVAPNARPPVCKIMDYGKYKYEVAQKARESRRNQQQTVVKEQKLRPKIDDHDYETKKSHVVRFLEAGSKVKVTIMFRGREQSRPELGYRLLQRLGADVADYGFVETSAKQDGRNMTMVLAPHRGAKTRASARHPEVPGAGSVQDIDATGDTDGSPH.

The disordered stretch occupies residues 172 to 202 (KTRASARHPEVPGAGSVQDIDATGDTDGSPH).

The protein belongs to the IF-3 family. As to quaternary structure, monomer.

It is found in the cytoplasm. IF-3 binds to the 30S ribosomal subunit and shifts the equilibrium between 70S ribosomes and their 50S and 30S subunits in favor of the free subunits, thus enhancing the availability of 30S subunits on which protein synthesis initiation begins. The polypeptide is Translation initiation factor IF-3 (Mycobacterium leprae (strain TN)).